The primary structure comprises 380 residues: Chaperone protein DnaJ (380 aa).

The J domain occupies 5–70; the sequence is DYYEVLGVER…SKRAAYDQYG (66 aa). The segment at 139–217 adopts a CR-type zinc-finger fold; that stretch reads GTTVNIRVPT…CHGEGRVEES (79 aa). Residues cysteine 152, cysteine 155, cysteine 169, cysteine 172, cysteine 191, cysteine 194, cysteine 205, and cysteine 208 each coordinate Zn(2+). CXXCXGXG motif repeat units follow at residues 152–159, 169–176, 191–198, and 205–212; these read CKPCDGSG, CPTCGGIG, CPRCHGHG, and CDSCHGEG.

This sequence belongs to the DnaJ family. As to quaternary structure, homodimer. Zn(2+) serves as cofactor.

The protein resides in the cytoplasm. Participates actively in the response to hyperosmotic and heat shock by preventing the aggregation of stress-denatured proteins and by disaggregating proteins, also in an autonomous, DnaK-independent fashion. Unfolded proteins bind initially to DnaJ; upon interaction with the DnaJ-bound protein, DnaK hydrolyzes its bound ATP, resulting in the formation of a stable complex. GrpE releases ADP from DnaK; ATP binding to DnaK triggers the release of the substrate protein, thus completing the reaction cycle. Several rounds of ATP-dependent interactions between DnaJ, DnaK and GrpE are required for fully efficient folding. Also involved, together with DnaK and GrpE, in the DNA replication of plasmids through activation of initiation proteins. This Pseudomonas syringae pv. tomato (strain ATCC BAA-871 / DC3000) protein is Chaperone protein DnaJ.